Reading from the N-terminus, the 458-residue chain is RuvB-like protein 1 (458 aa).

73–80 lines the ATP pocket; that stretch reads GPPGTGKT.

The protein belongs to the RuvB family. Interacts with FRI, and with FLX and FES1, two component of the transcription activator complex FRI-C. Interacts with the disease resistance genes RPM1 and RPP5.

It localises to the nucleus. The enzyme catalyses ATP + H2O = ADP + phosphate + H(+). Functionally, proposed core component of the chromatin remodeling INO80 complex which is involved in transcriptional regulation, DNA replication and probably DNA repair. Component of the NuA4 histone acetyltransferase complex which is involved in transcriptional activation of select genes principally by acetylation of nucleosomal histones H4 and H2A. Has single-stranded DNA-stimulated ATPase and ATP-dependent DNA helicase (3' to 5') activity suggesting a role in nuclear processes such as recombination and transcription. This Arabidopsis thaliana (Mouse-ear cress) protein is RuvB-like protein 1 (RIN1).